Here is a 195-residue protein sequence, read N- to C-terminus: TM2 domain-containing protein C41D11.9 (195 aa).

Residues 1-20 form the signal peptide; sequence MLHKILFLICLASFIPTIGS. The Extracellular segment spans residues 21–136; sequence ISGTKDVKSK…NWSSGYSWTK (116 aa). N-linked (GlcNAc...) asparagine glycosylation is found at Asn-55, Asn-93, and Asn-127. One can recognise a TM2 domain in the interval 131–179; sequence GYSWTKTMILSVVLGGFGADRFYLGLWKSAIGKLFSFGGLGVWTLVDVV. The helical transmembrane segment at 137–157 threads the bilayer; the sequence is TMILSVVLGGFGADRFYLGLW. Topologically, residues 158-163 are cytoplasmic; it reads KSAIGK. A helical transmembrane segment spans residues 164 to 184; that stretch reads LFSFGGLGVWTLVDVVLIAVG. Over 185 to 195 the chain is Extracellular; that stretch reads YIKPYDGSMYI.

It belongs to the TM2 family.

The protein localises to the membrane. The chain is TM2 domain-containing protein C41D11.9 from Caenorhabditis elegans.